The chain runs to 379 residues: Probable tRNA sulfurtransferase (379 aa).

In terms of domain architecture, THUMP spans 52-157 (DEFLDKLKFI…RHHAFVFCKI (106 aa)). Residues 175–176 (LL), arginine 257, glycine 279, and glutamine 288 contribute to the ATP site.

This sequence belongs to the ThiI family.

The protein localises to the cytoplasm. It carries out the reaction [ThiI sulfur-carrier protein]-S-sulfanyl-L-cysteine + a uridine in tRNA + 2 reduced [2Fe-2S]-[ferredoxin] + ATP + H(+) = [ThiI sulfur-carrier protein]-L-cysteine + a 4-thiouridine in tRNA + 2 oxidized [2Fe-2S]-[ferredoxin] + AMP + diphosphate. It catalyses the reaction [ThiS sulfur-carrier protein]-C-terminal Gly-Gly-AMP + S-sulfanyl-L-cysteinyl-[cysteine desulfurase] + AH2 = [ThiS sulfur-carrier protein]-C-terminal-Gly-aminoethanethioate + L-cysteinyl-[cysteine desulfurase] + A + AMP + 2 H(+). The protein operates within cofactor biosynthesis; thiamine diphosphate biosynthesis. In terms of biological role, catalyzes the ATP-dependent transfer of a sulfur to tRNA to produce 4-thiouridine in position 8 of tRNAs, which functions as a near-UV photosensor. Also catalyzes the transfer of sulfur to the sulfur carrier protein ThiS, forming ThiS-thiocarboxylate. This is a step in the synthesis of thiazole, in the thiamine biosynthesis pathway. The sulfur is donated as persulfide by IscS. The chain is Probable tRNA sulfurtransferase from Mycoplasmopsis pulmonis (strain UAB CTIP) (Mycoplasma pulmonis).